A 1642-amino-acid chain; its full sequence is Coiled-coil domain-containing protein 7A (1642 aa).

The disordered stretch occupies residues 21-51; that stretch reads PYKKGLLNSSPKPKEKHNAKSKYGKNESMVL. Residues 161-184 form an LRR 1 repeat; sequence VNQMEEISKDQSNLEELQSDGKTA. A coiled-coil region spans residues 279 to 330; it reads LEKALNDQQTIESKYKQLETDFQMLIMEKTLLEAEIRRLREIERVKSAAKEE. An LRR 2 repeat occupies 1310 to 1333; it reads IKELSKTLNLDGGDIELSDFVFKT.

As to expression, exclusively expressed in the testes.

This chain is Coiled-coil domain-containing protein 7A, found in Mus musculus (Mouse).